The following is a 20-amino-acid chain: Antimicrobial peptide AJN-10 (20 aa).

The protein resides in the secreted. Its function is as follows. Displays antimicrobial activity against the Gram-negative bacterium A.hydrophila. The chain is Antimicrobial peptide AJN-10 from Anguilla japonica (Japanese eel).